The following is a 214-amino-acid chain: 3-isopropylmalate dehydratase small subunit (214 aa).

The protein belongs to the LeuD family. LeuD type 1 subfamily. Heterodimer of LeuC and LeuD.

It catalyses the reaction (2R,3S)-3-isopropylmalate = (2S)-2-isopropylmalate. Its pathway is amino-acid biosynthesis; L-leucine biosynthesis; L-leucine from 3-methyl-2-oxobutanoate: step 2/4. Functionally, catalyzes the isomerization between 2-isopropylmalate and 3-isopropylmalate, via the formation of 2-isopropylmaleate. The protein is 3-isopropylmalate dehydratase small subunit of Pseudomonas entomophila (strain L48).